The sequence spans 52 residues: Lantibiotic gallidermin (52 aa).

A propeptide spanning residues 1-30 (MEAVKEKNELFDLDVKVNAKESNDSGAEPR) is cleaved from the precursor. Positions 33–37 (SKFLC) form a cross-link, lanthionine (Ser-Cys). A cross-link (beta-methyllanthionine (Thr-Cys)) is located at residues 38 to 41 (TPGC). Thr-44 carries the (Z)-2,3-didehydrobutyrine modification. The lanthionine (Ser-Cys) cross-link spans 46–51 (SFNSYC). Positions 49–52 (SYCC) form a cross-link, S-(2-aminovinyl)-D-cysteine (Ser-Cys).

It belongs to the type A lantibiotic family. In terms of processing, maturation of lantibiotics involves the enzymatic conversion of Thr, and Ser into dehydrated AA and the formation of thioether bonds with cysteine. The C-terminal lanthionine undergoes decarboxylation. This is followed by membrane translocation and cleavage of the modified precursor. Post-translationally, the structure of the 2,3-didehydrobutyrine is not discussed in PubMed:1932575. However, in Fig. 5 the NMR model appears to have the Z-isomer.

In terms of biological role, lanthionine-containing peptide antibiotic (lantibiotic) active on Gram-positive bacteria. The bactericidal activity of lantibiotics is based on depolarization of energized bacterial cytoplasmic membranes, initiated by the formation of aqueous transmembrane pores. In Staphylococcus gallinarum, this protein is Lantibiotic gallidermin (gdmA).